Here is a 232-residue protein sequence, read N- to C-terminus: Orotidine 5'-phosphate decarboxylase (232 aa).

Substrate-binding positions include D16, K38, 65–74 (DLKLHDIGNT), T119, R180, Q189, G209, and R210. The active-site Proton donor is the K67.

Belongs to the OMP decarboxylase family. Type 1 subfamily. As to quaternary structure, homodimer.

It carries out the reaction orotidine 5'-phosphate + H(+) = UMP + CO2. Its pathway is pyrimidine metabolism; UMP biosynthesis via de novo pathway; UMP from orotate: step 2/2. In terms of biological role, catalyzes the decarboxylation of orotidine 5'-monophosphate (OMP) to uridine 5'-monophosphate (UMP). This chain is Orotidine 5'-phosphate decarboxylase, found in Methylorubrum populi (strain ATCC BAA-705 / NCIMB 13946 / BJ001) (Methylobacterium populi).